We begin with the raw amino-acid sequence, 625 residues long: Threonine--tRNA ligase (625 aa).

The tract at residues 1 to 147 (MRMLLIHSDY…TIVPEEAKVE (147 aa)) is editing domain. The segment at 206 to 505 (PHVRLMLEHE…MQEGKKPMFP (300 aa)) is catalytic. Residues C298, H350, and H474 each coordinate Zn(2+).

It belongs to the class-II aminoacyl-tRNA synthetase family. As to quaternary structure, homodimer. Zn(2+) is required as a cofactor.

Its subcellular location is the cytoplasm. The enzyme catalyses tRNA(Thr) + L-threonine + ATP = L-threonyl-tRNA(Thr) + AMP + diphosphate + H(+). In terms of biological role, catalyzes the attachment of threonine to tRNA(Thr) in a two-step reaction: L-threonine is first activated by ATP to form Thr-AMP and then transferred to the acceptor end of tRNA(Thr). Also edits incorrectly charged L-seryl-tRNA(Thr). The chain is Threonine--tRNA ligase from Pyrococcus furiosus (strain ATCC 43587 / DSM 3638 / JCM 8422 / Vc1).